Consider the following 647-residue polypeptide: DNA mismatch repair protein MutL (647 aa).

Disordered stretches follow at residues 356–391 and 407–428; these read EGSQ…SSIS and PRPQ…EALP. Positions 413-423 are enriched in polar residues; sequence LRPQYQGSVTS.

The protein belongs to the DNA mismatch repair MutL/HexB family.

This protein is involved in the repair of mismatches in DNA. It is required for dam-dependent methyl-directed DNA mismatch repair. May act as a 'molecular matchmaker', a protein that promotes the formation of a stable complex between two or more DNA-binding proteins in an ATP-dependent manner without itself being part of a final effector complex. This chain is DNA mismatch repair protein MutL, found in Citrifermentans bemidjiense (strain ATCC BAA-1014 / DSM 16622 / JCM 12645 / Bem) (Geobacter bemidjiensis).